The sequence spans 420 residues: Serine hydroxymethyltransferase (420 aa).

(6S)-5,6,7,8-tetrahydrofolate-binding positions include L121 and 125 to 127 (GHL). An N6-(pyridoxal phosphate)lysine modification is found at K229.

This sequence belongs to the SHMT family. In terms of assembly, homodimer. It depends on pyridoxal 5'-phosphate as a cofactor.

The protein localises to the cytoplasm. It catalyses the reaction (6R)-5,10-methylene-5,6,7,8-tetrahydrofolate + glycine + H2O = (6S)-5,6,7,8-tetrahydrofolate + L-serine. Its pathway is one-carbon metabolism; tetrahydrofolate interconversion. The protein operates within amino-acid biosynthesis; glycine biosynthesis; glycine from L-serine: step 1/1. In terms of biological role, catalyzes the reversible interconversion of serine and glycine with tetrahydrofolate (THF) serving as the one-carbon carrier. This reaction serves as the major source of one-carbon groups required for the biosynthesis of purines, thymidylate, methionine, and other important biomolecules. Also exhibits THF-independent aldolase activity toward beta-hydroxyamino acids, producing glycine and aldehydes, via a retro-aldol mechanism. In Aggregatibacter actinomycetemcomitans (Actinobacillus actinomycetemcomitans), this protein is Serine hydroxymethyltransferase.